The primary structure comprises 243 residues: Sugar fermentation stimulation protein homolog (243 aa).

Belongs to the SfsA family.

The sequence is that of Sugar fermentation stimulation protein homolog from Bdellovibrio bacteriovorus (strain ATCC 15356 / DSM 50701 / NCIMB 9529 / HD100).